Reading from the N-terminus, the 51-residue chain is Small ribosomal subunit protein eS31 (51 aa).

Residues Cys-22, Cys-25, Cys-40, and Cys-43 each contribute to the Zn(2+) site. The C4-type zinc finger occupies 22 to 43; sequence CPRCGPGVFMADHGDRWACGRC.

This sequence belongs to the eukaryotic ribosomal protein eS31 family. Part of the 30S ribosomal subunit. Zn(2+) serves as cofactor.

The polypeptide is Small ribosomal subunit protein eS31 (Pyrococcus abyssi (strain GE5 / Orsay)).